Reading from the N-terminus, the 147-residue chain is Hemoglobin subunit beta (147 aa).

Residue V2 is modified to N-acetylvaline. In terms of domain architecture, Globin spans 3–147 (HLTPEEKNAV…VANALAHKYH (145 aa)). T13 is subject to Phosphothreonine. S45 carries the post-translational modification Phosphoserine. Position 60 is an N6-acetyllysine (K60). H64 contacts heme b. K83 carries the N6-acetyllysine modification. Heme b is bound at residue H93. C94 carries the post-translational modification S-nitrosocysteine. Position 145 is an N6-acetyllysine (K145).

It belongs to the globin family. In terms of assembly, heterotetramer of two alpha chains and two beta chains. In terms of tissue distribution, red blood cells.

Involved in oxygen transport from the lung to the various peripheral tissues. The chain is Hemoglobin subunit beta (HBB) from Papio anubis (Olive baboon).